The sequence spans 95 residues: Heteroscorpine-1 (95 aa).

The signal sequence occupies residues 1 to 19 (MNSKLTALIFLGLVAIASC). The region spanning 55–95 (EFQCVANIDTMGNCETHCQKTSGEKGFCHGTKCKCGKPLSY) is the BetaSPN-type CS-alpha/beta domain. Intrachain disulfides connect Cys-58/Cys-82, Cys-68/Cys-87, and Cys-72/Cys-89.

This sequence belongs to the long chain scorpion toxin family. Class 3 subfamily. Contains 3 disulfide bonds. Expressed by the venom gland.

It is found in the secreted. Functionally, has antibacterial activity against B.subtilis, K.pneumoniae and P.aeruginosa. The chain is Heteroscorpine-1 from Heterometrus laoticus (Thai giant scorpion).